A 596-amino-acid polypeptide reads, in one-letter code: Putative terpene synthase 3, chloroplastic (596 aa).

Residues 1–46 (MATLSMQVSTLSKQVKNLNTFGMGSASKLPMVARRVSTIRLRPICS) constitute a chloroplast transit peptide. Residues aspartate 349 and aspartate 353 each coordinate Mn(2+). The DDXXD motif signature appears at 349–353 (DDVYD). Homodimerization stretches follow at residues 355 to 361 (YGTLDEL) and 427 to 464 (EAKW…FTLP). Mn(2+)-binding residues include aspartate 493 and glutamate 501.

It belongs to the terpene synthase family. Homodimer. The cofactor is Mn(2+). Requires Mg(2+) as cofactor.

It localises to the plastid. The protein localises to the chloroplast. The protein operates within secondary metabolite biosynthesis; terpenoid biosynthesis. In terms of biological role, putative monoterpene synthase. This is Putative terpene synthase 3, chloroplastic from Thymus vulgaris (Thyme).